Consider the following 41-residue polypeptide: Photosystem II reaction center protein Y (41 aa).

A helical membrane pass occupies residues 4–22 (LIVVVLPILAAVTWVVFNI).

This sequence belongs to the PsbY family. In terms of assembly, PSII is composed of 1 copy each of membrane proteins PsbA, PsbB, PsbC, PsbD, PsbE, PsbF, PsbH, PsbI, PsbJ, PsbK, PsbL, PsbM, PsbT, PsbX, PsbY, Psb30/Ycf12, peripheral proteins PsbO, CyanoQ (PsbQ), PsbU, PsbV and a large number of cofactors. It forms dimeric complexes.

The protein localises to the cellular thylakoid membrane. In terms of biological role, loosely associated component of the core of photosystem II (PSII), it is not always seen in crystals. PSII is a light-driven water plastoquinone oxidoreductase, using light energy to abstract electrons from H(2)O, generating a proton gradient subsequently used for ATP formation. This chain is Photosystem II reaction center protein Y, found in Prochlorococcus marinus (strain MIT 9211).